Consider the following 524-residue polypeptide: Translation initiation factor eIF2B subunit delta (524 aa).

The segment at 1–174 (MAAVAVAVRE…RQQVPTRKDY (174 aa)) is disordered. A2 is subject to N-acetylalanine. Basic and acidic residues-rich tracts occupy residues 8–20 (VREE…KTEL) and 31–40 (LTQEEKLQLR). S12 carries the post-translational modification Phosphoserine. Basic residues predominate over residues 41-51 (KEKKQQKKKRK). T86 is subject to Phosphothreonine. Basic and acidic residues-rich tracts occupy residues 96–121 (SKAE…RKGE) and 161–174 (RKPD…RKDY). Residues 171 to 180 (RKDYGSKVSL) form a may bind the chemical integrated stress response (ISR) inhibitor ISRIB region.

Belongs to the eIF-2B alpha/beta/delta subunits family. Component of the translation initiation factor 2B (eIF2B) complex which is a heterodecamer of two sets of five different subunits: alpha, beta, gamma, delta and epsilon. Subunits alpha, beta and delta comprise a regulatory subcomplex and subunits epsilon and gamma comprise a catalytic subcomplex. Within the complex, the hexameric regulatory complex resides at the center, with the two heterodimeric catalytic subcomplexes bound on opposite sides.

Its subcellular location is the cytoplasm. The protein localises to the cytosol. With respect to regulation, activated by the chemical integrated stress response (ISR) inhibitor ISRIB which stimulates guanine nucleotide exchange factor activity for both phosphorylated and unphosphorylated eIF2. Its function is as follows. Acts as a component of the translation initiation factor 2B (eIF2B) complex, which catalyzes the exchange of GDP for GTP on eukaryotic initiation factor 2 (eIF2) gamma subunit. Its guanine nucleotide exchange factor activity is repressed when bound to eIF2 complex phosphorylated on the alpha subunit, thereby limiting the amount of methionyl-initiator methionine tRNA available to the ribosome and consequently global translation is repressed. The polypeptide is Translation initiation factor eIF2B subunit delta (Eif2b4) (Rattus norvegicus (Rat)).